The sequence spans 518 residues: Probable cyclic di-GMP phosphodiesterase PdeN (518 aa).

The next 2 helical transmembrane spans lie at 16 to 36 (CIVA…LVAW) and 236 to 256 (VWYA…LCYY). The EAL domain occupies 261–514 (RMRPGREIMT…DFVRWLKKPY (254 aa)).

It is found in the cell inner membrane. It catalyses the reaction 3',3'-c-di-GMP + H2O = 5'-phosphoguanylyl(3'-&gt;5')guanosine + H(+). In terms of biological role, phosphodiesterase (PDE) that catalyzes the hydrolysis of cyclic-di-GMP (c-di-GMP) to 5'-pGpG. The sequence is that of Probable cyclic di-GMP phosphodiesterase PdeN from Escherichia coli (strain K12).